We begin with the raw amino-acid sequence, 66 residues long: Alpha-actitoxin-Ms11a-2 (66 aa).

Residues 1–24 (MASKIFFVLAVFLVMSAVLPESFA) form the signal peptide. Disulfide bonds link Cys26–Cys41, Cys33–Cys46, and Cys40–Cys61.

It is found in the secreted. Its subcellular location is the nematocyst. Functionally, alpha-toxins act on postsynaptic membranes, they bind to the nicotinic acetylcholine receptors (nAChR) and thus inhibit them. This toxin competes with alpha-bungarotoxin for binding to orthosteric sites on muscle-type T.carlifornicus (IC(50)=1080 nM) and human alpha-7/CHRNA7 nAChRs (IC(50)=14.13 uM). In Metridium senile (Brown sea anemone), this protein is Alpha-actitoxin-Ms11a-2.